The primary structure comprises 484 residues: MWYVSTRGIAPRVNFEGALFSGYAPDGGLFMPEELPQLDRKTLCQWSTLSYPGLVKELCALFIGSELIPKDELNDLIDRAFSRFRHREVVHLSRLRNGLNVLELWHGVTYAFKDLSLSCTAQFLQYFLEKREKHVTVVVGTSGDTGSAAIESVQGAKNMDIIVLLPKGHCTKIQELQMTTVLKENVHVFGVEGNSDELDEPIKTVFADVAFVKKHNLMSLNSINWSRVLVQMAHHFFAYFQCMPSLDTHPLPLVEVVVPTGAAGNLAAGYIAQKIGLPVRLVVAVNGNDIIHRTVQQGDFSLSEAVKSTLASAMDIQVPYNMERVFWLLSGSDSQVTRALMEQFERTQSVNLPKELHSKLSEAVTSVSVSDEAITQTMGRCWDENQYLLCPHSAVAVNYHYQQMDRQQPSTPRCCLAPASAAKFPEAVLAAGLTPETPAEIVALEHKETRCTPMRRGDNWMLMLRDTIEDLSRRWRSHALNTSR.

Position 113 is an N6-(pyridoxal phosphate)lysine (lysine 113).

This sequence belongs to the threonine synthase family. The cofactor is pyridoxal 5'-phosphate.

Acts as a catabolic phospho-lyase on both gamma- and beta-phosphorylated substrates. Degrades O-phospho-threonine (PThr) to alpha-ketobutyrate, ammonia and phosphate. The protein is Threonine synthase-like 2 (THNSL2) of Pongo abelii (Sumatran orangutan).